Reading from the N-terminus, the 303-residue chain is N-acetyl-D-glucosamine kinase (303 aa).

ATP-binding positions include Gly4–Lys11 and Gly133–Phe140. Zn(2+) contacts are provided by His157, Cys177, Cys179, and Cys184.

It belongs to the ROK (NagC/XylR) family. NagK subfamily.

The catalysed reaction is N-acetyl-D-glucosamine + ATP = N-acetyl-D-glucosamine 6-phosphate + ADP + H(+). It functions in the pathway cell wall biogenesis; peptidoglycan recycling. Functionally, catalyzes the phosphorylation of N-acetyl-D-glucosamine (GlcNAc) derived from cell-wall degradation, yielding GlcNAc-6-P. This is N-acetyl-D-glucosamine kinase from Escherichia coli (strain K12 / DH10B).